The sequence spans 141 residues: ATP synthase epsilon chain (141 aa).

Belongs to the ATPase epsilon chain family. F-type ATPases have 2 components, CF(1) - the catalytic core - and CF(0) - the membrane proton channel. CF(1) has five subunits: alpha(3), beta(3), gamma(1), delta(1), epsilon(1). CF(0) has three main subunits: a, b and c.

It is found in the cell membrane. Its function is as follows. Produces ATP from ADP in the presence of a proton gradient across the membrane. This is ATP synthase epsilon chain (atpC) from Mycoplasmopsis pulmonis (strain UAB CTIP) (Mycoplasma pulmonis).